Reading from the N-terminus, the 173-residue chain is Photosystem I assembly protein Ycf3 (173 aa).

3 TPR repeats span residues 35–68, 72–105, and 120–153; these read AYIYYRDGLAAQNNGDYSEALEYYKESLLLEENK, GETLKNMAIIYMSNGEEDLSIETYEKALVENPKQ, and GRNAEQNGDLDQRDIWFDKAAEVWSKAVRLYPGG.

It belongs to the Ycf3 family.

Its subcellular location is the cellular thylakoid membrane. Essential for the assembly of the photosystem I (PSI) complex. May act as a chaperone-like factor to guide the assembly of the PSI subunits. In Prochlorococcus marinus (strain MIT 9301), this protein is Photosystem I assembly protein Ycf3.